The following is a 272-amino-acid chain: Cell division protein FtsQ (272 aa).

Residues 1 to 43 are Cytoplasmic-facing; that stretch reads MEYNPPNTRERIVARRQRMRRNSTEPVVPGWRWRLREGLRSGR. A helical transmembrane segment spans residues 44–64; it reads IVSGIVFVISCFALFYVLFSS. Over 65–272 the chain is Extracellular; sequence RFRVQTVEVV…FYQYRPDGSS (208 aa). Residues 66–133 form the POTRA domain; sequence FRVQTVEVVG…DRARIVIVER (68 aa).

The protein belongs to the FtsQ/DivIB family. FtsQ subfamily.

It is found in the cell membrane. Its function is as follows. Essential cell division protein. The chain is Cell division protein FtsQ from Chloroflexus aurantiacus (strain ATCC 29366 / DSM 635 / J-10-fl).